The sequence spans 502 residues: Alpha-ketoglutarate-dependent dioxygenase FTO (502 aa).

The segment at 32-324 is fe2OG dioxygenase domain; sequence TPKDDEFYQQ…SSTHRVAECS (293 aa). Residues arginine 96 and tyrosine 108 each contribute to the substrate site. Asparagine 202 is a binding site for 2-oxoglutarate. Residues 210 to 221 are loop L1; predicted to block binding of double-stranded DNA or RNA; the sequence is PYLKEEPYFGMG. An N6-acetyllysine modification is found at lysine 213. Fe cation contacts are provided by histidine 228 and aspartate 230. Residue 228–231 coordinates substrate; the sequence is HHDE. Tyrosine 292 is a binding site for 2-oxoglutarate. Histidine 304 provides a ligand contact to Fe cation. Residues 313-315, threonine 317, and arginine 319 contribute to the 2-oxoglutarate site; that span reads RFS.

The protein belongs to the fto family. As to quaternary structure, monomer. May also exist as homodimer. Fe(2+) is required as a cofactor. In terms of tissue distribution, ubiquitous. Highly expressed in teeth and weakly in bone.

It localises to the nucleus. It is found in the nucleus speckle. The protein resides in the cytoplasm. It catalyses the reaction a 5'-end (N(7)-methyl 5'-triphosphoguanosine)-(N(6),2'-O-dimethyladenosine) in mRNA + 2-oxoglutarate + O2 = a 5'-end (N(7)-methyl 5'-triphosphoguanosine)-(2'-O-methyladenosine) in mRNA + formaldehyde + succinate + CO2. The enzyme catalyses an N(6)-methyladenosine in mRNA + 2-oxoglutarate + O2 = an adenosine in mRNA + formaldehyde + succinate + CO2. The catalysed reaction is N(6)-methyladenosine in U6 snRNA + 2-oxoglutarate + O2 = adenosine in U6 snRNA + formaldehyde + succinate + CO2. It carries out the reaction a 5'-end (N(7)-methyl 5'-triphosphoguanosine)-(N(6),2'-O-dimethyladenosine) in U6 snRNA + 2-oxoglutarate + O2 = a 5'-end (N(7)-methyl 5'-triphosphoguanosine)-(2'-O-methyladenosine) in U6 snRNA + formaldehyde + succinate + CO2. It catalyses the reaction an N(1)-methyladenosine in tRNA + 2-oxoglutarate + O2 = an adenosine in tRNA + formaldehyde + succinate + CO2. Its activity is regulated as follows. Activated by ascorbate. Inhibited by N-oxalylglycine, fumarate and succinate. Its function is as follows. RNA demethylase that mediates oxidative demethylation of different RNA species, such as mRNAs, tRNAs and snRNAs, and acts as a regulator of fat mass, adipogenesis and energy homeostasis. Specifically demethylates N(6)-methyladenosine (m6A) RNA, the most prevalent internal modification of messenger RNA (mRNA) in higher eukaryotes. M6A demethylation by FTO affects mRNA expression and stability. Also able to demethylate m6A in U6 small nuclear RNA (snRNA). Mediates demethylation of N(6),2'-O-dimethyladenosine cap (m6A(m)), by demethylating the N(6)-methyladenosine at the second transcribed position of mRNAs and U6 snRNA. Demethylation of m6A(m) in the 5'-cap by FTO affects mRNA stability by promoting susceptibility to decapping. Also acts as a tRNA demethylase by removing N(1)-methyladenine from various tRNAs. Has no activity towards 1-methylguanine. Has no detectable activity towards double-stranded DNA. Also able to repair alkylated DNA and RNA by oxidative demethylation: demethylates single-stranded RNA containing 3-methyluracil, single-stranded DNA containing 3-methylthymine and has low demethylase activity towards single-stranded DNA containing 1-methyladenine or 3-methylcytosine. Ability to repair alkylated DNA and RNA is however unsure in vivo. Involved in the regulation of fat mass, adipogenesis and body weight, thereby contributing to the regulation of body size and body fat accumulation. Involved in the regulation of thermogenesis and the control of adipocyte differentiation into brown or white fat cells. Regulates activity of the dopaminergic midbrain circuitry via its ability to demethylate m6A in mRNAs. The protein is Alpha-ketoglutarate-dependent dioxygenase FTO of Rattus norvegicus (Rat).